Here is a 1050-residue protein sequence, read N- to C-terminus: Elongation factor 3 (1050 aa).

2 residues coordinate ADP: Val43 and His45. One copy of the HEAT 1 repeat lies at 46 to 83 (DVPVEFFEDLKKQIQSKDAKVSLAALDAYKHIASTNGL). Residue Ser86 participates in ADP binding. HEAT repeat units lie at residues 89-126 (PYVVDLVSEVAVKAGDKNKDVQTAASDALLAIASAITP), 127-165 (TAVKAILPKLIDNLTNTNKWTEKVAILRAVSQLVDTAKA), 169-206 (LRMPELIPVLSESMWDTKKEVKEAATATMTKSTETIDN), 208-244 (DIEKFIPQLISCIAKPTEVPETVHLLGATTFVSEVTM), 245-282 (ATLSIMAPLLSRGLAERDTAIKRKAAVIVDNMCKLVED), and 288-326 (PFMDKLLPGLKNNFANMADPEAREVTQRALNTLRRVGAV). 3 residues coordinate ADP: Thr395, His399, and Glu400. ABC transporter domains lie at 429-646 (DEGE…YYEL) and 672-998 (VKVS…KKDD). 4 residues coordinate ADP: Asn708, Glu927, Asn930, and His956. Residues 980–1050 (GHNWVQGQGS…DAYVSSDEEF (71 aa)) form a disordered region. Over residues 1013-1037 (AAKKKKKLSSAELRKKKKERMKKKK) the composition is skewed to basic residues.

The protein belongs to the ABC transporter superfamily. ABCF family. EF3 subfamily. In terms of assembly, monomer.

It is found in the cytoplasm. It carries out the reaction ATP + H2O = ADP + phosphate + H(+). It participates in protein biosynthesis; polypeptide chain elongation. Functionally, ribosome-dependent ATPase that functions in cytoplasmic translation elongation. Required for the ATP-dependent release of deacylated tRNA from the ribosomal E-site during protein biosynthesis. Stimulates the eEF1A-dependent binding of aminoacyl-tRNA to the ribosomal A-site, which has reduced affinity for tRNA as long as the E-site is occupied. Assists translation termination by stimulating the release of nascent protein from the ribosome by release factors. The sequence is that of Elongation factor 3 (CEF3) from Candida albicans (strain SC5314 / ATCC MYA-2876) (Yeast).